Reading from the N-terminus, the 142-residue chain is Small ribosomal subunit protein uS12 (142 aa).

This sequence belongs to the universal ribosomal protein uS12 family. In terms of assembly, part of the 30S ribosomal subunit.

Functionally, with S4 and S5 plays an important role in translational accuracy. Located at the interface of the 30S and 50S subunits. In Methanothrix thermoacetophila (strain DSM 6194 / JCM 14653 / NBRC 101360 / PT) (Methanosaeta thermophila), this protein is Small ribosomal subunit protein uS12.